Here is a 70-residue protein sequence, read N- to C-terminus: DNA-directed RNA polymerase subunit omega (70 aa).

It belongs to the RNA polymerase subunit omega family. The RNAP catalytic core consists of 2 alpha, 1 beta, 1 beta' and 1 omega subunit. When a sigma factor is associated with the core the holoenzyme is formed, which can initiate transcription.

The catalysed reaction is RNA(n) + a ribonucleoside 5'-triphosphate = RNA(n+1) + diphosphate. Functionally, promotes RNA polymerase assembly. Latches the N- and C-terminal regions of the beta' subunit thereby facilitating its interaction with the beta and alpha subunits. This Bacillus cereus (strain B4264) protein is DNA-directed RNA polymerase subunit omega.